A 603-amino-acid chain; its full sequence is MTNVPISRLRNFCIIAHIDHGKSTLADRLLQDTGTVSSRDMQEQFLDNMDLERERGITIKLQAARMNYKADDGEEYVLNLIDTPGHVDFSYEVSRSLQACEGALLVVDASQGVEAQTLANVYLALENDLEIIPVLNKVDLPGADPEKIKNEIESIIGLDTSKAISCSAKTGVGIPEILQAVVDRIPSPKDNTDQATKALIFDSYYDPYRGVIVYFRIMSGGISKKDKVLLMSSKKSYELDEIGVMAPDQVKVNSLHAGEVGYLAASIKAVADARVGDTITLVDRPAQDALPGYAEAKPMVFCGLFPTDADQYPDLRDALDKLQLSDAALKYEPETSSAMGFGFRCGFLGLLHMEIVQERLEREYDLDLIVTAPSVIYKVKMIDGEIRMIDNPATLPDPQKRETIEEPYVRMEIYAPNDYNGTLMGLCQDRRGDFIDMKYITTDRVTLIYEIPLAEVVTDFFDQMKSRTKGYASMEYHLIGYRENDLVRLDVLINSERADPLTTIVHKDNAYGVGKGLVEKLKELIPKQQFKIPLQASIGSRIIASEGISALRKDVLSKCYGGDISRKKKLLKKQAKGKKRMKSMGKVDVPQEAFMAVLKLNKD.

The tr-type G domain maps to 7-189; sequence SRLRNFCIIA…AVVDRIPSPK (183 aa). GTP is bound by residues 19-24 and 136-139; these read DHGKST and NKVD.

Belongs to the TRAFAC class translation factor GTPase superfamily. Classic translation factor GTPase family. LepA subfamily.

It is found in the cell inner membrane. The enzyme catalyses GTP + H2O = GDP + phosphate + H(+). Its function is as follows. Required for accurate and efficient protein synthesis under certain stress conditions. May act as a fidelity factor of the translation reaction, by catalyzing a one-codon backward translocation of tRNAs on improperly translocated ribosomes. Back-translocation proceeds from a post-translocation (POST) complex to a pre-translocation (PRE) complex, thus giving elongation factor G a second chance to translocate the tRNAs correctly. Binds to ribosomes in a GTP-dependent manner. This chain is Elongation factor 4, found in Prochlorococcus marinus (strain NATL2A).